We begin with the raw amino-acid sequence, 255 residues long: MKALLALPLLLLLSTPPCAPQVSGIRGDALERFCLQQPLDCDDIYAQGYQSDGVYLIYPSGPSVPVPVFCDMTTEGGKWTVFQKRFNGSVSFFRGWNDYKLGFGRADGEYWLGLQNMHLLTLKQKYELRVDLEDFENNTAYAKYADFSISPNAVSAEEDGYTLFVAGFEDGGAGDSLSYHSGQKFSTFDRDQDLFVQNCAALSSGAFWFRSCHFANLNGFYLGGSHLSYANGINWAQWKGFYYSLKRTEMKIRRA.

The signal sequence occupies residues Met-1–Gln-21. The Cell attachment site motif lies at Arg-26 to Asp-28. The 224-residue stretch at Arg-32–Ala-255 folds into the Fibrinogen C-terminal domain. N-linked (GlcNAc...) asparagine glycosylation is found at Asn-87 and Asn-137.

Homodimer. Can also form higher oligomers. Interacts with FBN1, FBN2 and LOX. Interacts with COL1A1 in a Ca (2+)-dependent manner. Interacts with ELN in a Ca (2+)-dependent manner; this interaction promotes ELN self-assembly.

Its subcellular location is the secreted. It is found in the extracellular space. It localises to the extracellular matrix. Could be involved in calcium-dependent cell adhesion or intercellular interactions. May contribute to the elastic fiber assembly and/or maintenance. This Homo sapiens (Human) protein is Microfibril-associated glycoprotein 4 (MFAP4).